The sequence spans 429 residues: Adenylosuccinate synthetase (429 aa).

Residues 12–18 (GDEGKGK) and 40–42 (GHT) each bind GTP. The active-site Proton acceptor is D13. D13 and G40 together coordinate Mg(2+). IMP-binding positions include 13 to 16 (DEGK), 38 to 41 (NAGH), T128, R142, Q223, T238, and R302. Residue H41 is the Proton donor of the active site. 298–304 (TTTGRPR) provides a ligand contact to substrate. GTP is bound by residues R304, 330–332 (CID), and 412–414 (SVG).

The protein belongs to the adenylosuccinate synthetase family. In terms of assembly, homodimer. It depends on Mg(2+) as a cofactor.

It localises to the cytoplasm. It catalyses the reaction IMP + L-aspartate + GTP = N(6)-(1,2-dicarboxyethyl)-AMP + GDP + phosphate + 2 H(+). Its pathway is purine metabolism; AMP biosynthesis via de novo pathway; AMP from IMP: step 1/2. In terms of biological role, plays an important role in the de novo pathway of purine nucleotide biosynthesis. Catalyzes the first committed step in the biosynthesis of AMP from IMP. This is Adenylosuccinate synthetase from Streptococcus mutans serotype c (strain ATCC 700610 / UA159).